Here is a 338-residue protein sequence, read N- to C-terminus: Lipoate-protein ligase A (338 aa).

In terms of domain architecture, BPL/LPL catalytic spans 29 to 216 (PATQRVLFLW…AFFAHYGERV (188 aa)). Residues arginine 71, 76-79 (GAVF), and lysine 134 contribute to the ATP site. Residue lysine 134 participates in (R)-lipoate binding.

It belongs to the LplA family. In terms of assembly, monomer.

It localises to the cytoplasm. The catalysed reaction is L-lysyl-[lipoyl-carrier protein] + (R)-lipoate + ATP = N(6)-[(R)-lipoyl]-L-lysyl-[lipoyl-carrier protein] + AMP + diphosphate + H(+). It participates in protein modification; protein lipoylation via exogenous pathway; protein N(6)-(lipoyl)lysine from lipoate: step 1/2. The protein operates within protein modification; protein lipoylation via exogenous pathway; protein N(6)-(lipoyl)lysine from lipoate: step 2/2. Functionally, catalyzes both the ATP-dependent activation of exogenously supplied lipoate to lipoyl-AMP and the transfer of the activated lipoyl onto the lipoyl domains of lipoate-dependent enzymes. This is Lipoate-protein ligase A from Escherichia coli O6:H1 (strain CFT073 / ATCC 700928 / UPEC).